A 391-amino-acid chain; its full sequence is Formate-dependent phosphoribosylglycinamide formyltransferase (391 aa).

Residues 18-19 (EL) and Glu-78 contribute to the N(1)-(5-phospho-beta-D-ribosyl)glycinamide site. ATP is bound by residues Arg-110, Lys-151, 156 to 161 (SSGKGQ), 191 to 194 (EEFI), and Glu-199. The region spanning 115 to 305 (ELVSRDLKIK…EFELHLRAFL (191 aa)) is the ATP-grasp domain. Mg(2+) contacts are provided by Glu-264 and Glu-276. N(1)-(5-phospho-beta-D-ribosyl)glycinamide-binding positions include Asp-283, Lys-353, and 360–361 (RR).

It belongs to the PurK/PurT family. As to quaternary structure, homodimer.

It catalyses the reaction N(1)-(5-phospho-beta-D-ribosyl)glycinamide + formate + ATP = N(2)-formyl-N(1)-(5-phospho-beta-D-ribosyl)glycinamide + ADP + phosphate + H(+). It participates in purine metabolism; IMP biosynthesis via de novo pathway; N(2)-formyl-N(1)-(5-phospho-D-ribosyl)glycinamide from N(1)-(5-phospho-D-ribosyl)glycinamide (formate route): step 1/1. In terms of biological role, involved in the de novo purine biosynthesis. Catalyzes the transfer of formate to 5-phospho-ribosyl-glycinamide (GAR), producing 5-phospho-ribosyl-N-formylglycinamide (FGAR). Formate is provided by PurU via hydrolysis of 10-formyl-tetrahydrofolate. The polypeptide is Formate-dependent phosphoribosylglycinamide formyltransferase (Prochlorococcus marinus (strain MIT 9312)).